Reading from the N-terminus, the 2684-residue chain is Probable polyketide synthase 27 (2684 aa).

The Ketosynthase family 3 (KS3) domain occupies 11–442; the sequence is CGDVAIIGIG…GSNVCLILSE (432 aa). Active-site for beta-ketoacyl synthase activity residues include C183, H322, and H365. The tract at residues 650–683 is acyl/malonyl transferases; it reads GVSADIIVGHSLGEMSSSYSSGMIDFETLCYLIY. The active-site For acyl/malonyl transferase activity is S660. The segment at 958–1087 is N-terminal hotdog fold; the sequence is HEKITSEGPP…GNFSLFKHNS (130 aa). In terms of domain architecture, PKS/mFAS DH spans 958–1276; the sequence is HEKITSEGPP…CTSVSLVNPR (319 aa). H999 acts as the Proton acceptor; for dehydratase activity in catalysis. The C-terminal hotdog fold stretch occupies residues 1104 to 1276; that stretch reads NFTTISKQEF…CTSVSLVNPR (173 aa). D1173 acts as the Proton donor; for dehydratase activity in catalysis. Positions 1202–1221 are disordered; the sequence is IPSSSSSSKDDNDCDSNNNN. The 78-residue stretch at 2585–2662 folds into the Carrier domain; that stretch reads SDNEFIHSTI…QSIDIIKFGY (78 aa). S2622 carries the O-(pantetheine 4'-phosphoryl)serine modification.

Pantetheine 4'-phosphate serves as cofactor.

In terms of biological role, probable polyketide synthase. The protein is Probable polyketide synthase 27 (pks27) of Dictyostelium discoideum (Social amoeba).